The sequence spans 469 residues: ATP synthase subunit beta (469 aa).

Position 156 to 163 (156 to 163 (GGAGVGKT)) interacts with ATP.

It belongs to the ATPase alpha/beta chains family. F-type ATPases have 2 components, CF(1) - the catalytic core - and CF(0) - the membrane proton channel. CF(1) has five subunits: alpha(3), beta(3), gamma(1), delta(1), epsilon(1). CF(0) has three main subunits: a(1), b(2) and c(9-12). The alpha and beta chains form an alternating ring which encloses part of the gamma chain. CF(1) is attached to CF(0) by a central stalk formed by the gamma and epsilon chains, while a peripheral stalk is formed by the delta and b chains.

It is found in the cell membrane. The enzyme catalyses ATP + H2O + 4 H(+)(in) = ADP + phosphate + 5 H(+)(out). Its function is as follows. Produces ATP from ADP in the presence of a proton gradient across the membrane. The catalytic sites are hosted primarily by the beta subunits. In Lactococcus lactis subsp. lactis (strain IL1403) (Streptococcus lactis), this protein is ATP synthase subunit beta.